The following is a 292-amino-acid chain: Protease HtpX (292 aa).

The next 2 helical transmembrane spans lie at 4–24 (IVLF…ILFL) and 32–52 (IYGL…LSLI). Residue His-139 coordinates Zn(2+). The active site involves Glu-140. His-143 is a Zn(2+) binding site. Helical transmembrane passes span 147–167 (GDMI…IFIS) and 193–213 (FVYF…ASII). Glu-222 contributes to the Zn(2+) binding site.

Belongs to the peptidase M48B family. Requires Zn(2+) as cofactor.

The protein localises to the cell membrane. The chain is Protease HtpX from Buchnera aphidicola subsp. Acyrthosiphon pisum (strain 5A).